The chain runs to 572 residues: Myb-like protein Y (572 aa).

The segment covering 196 to 211 has biased composition (polar residues); the sequence is QSQSQLPTATNNNNKQ. The segment at 196–283 is disordered; that stretch reads QSQSQLPTAT…NNNNNNNNNE (88 aa). Composition is skewed to low complexity over residues 222 to 237 and 260 to 281; these read TATA…TTTT and NDNN…NNNN. The Myb-like domain occupies 311-360; the sequence is PWTVEDQKKLEDALTKYPPSRFSSVSRWQMVSKELGISPKAVALRYNQML. The disordered stretch occupies residues 367–456; the sequence is KPSLQQQQQQ…TTVTPNMTTP (90 aa). Composition is skewed to low complexity over residues 371–392 and 414–425; these read QQQQ…TTTT and SSFSSPSSSSKE. The segment covering 426–435 has biased composition (basic and acidic residues); that stretch reads SPNKKEKTTH. Low complexity predominate over residues 436-455; that stretch reads DTTTTTNTATTTTVTPNMTT.

The protein is Myb-like protein Y (mybY) of Dictyostelium discoideum (Social amoeba).